A 360-amino-acid polypeptide reads, in one-letter code: Peptide chain release factor 1 (360 aa).

Q236 is modified (N5-methylglutamine).

Belongs to the prokaryotic/mitochondrial release factor family. Post-translationally, methylated by PrmC. Methylation increases the termination efficiency of RF1.

It localises to the cytoplasm. Its function is as follows. Peptide chain release factor 1 directs the termination of translation in response to the peptide chain termination codons UAG and UAA. The polypeptide is Peptide chain release factor 1 (Limosilactobacillus fermentum (strain NBRC 3956 / LMG 18251) (Lactobacillus fermentum)).